We begin with the raw amino-acid sequence, 269 residues long: Phosphonoacetaldehyde hydrolase (269 aa).

Asp9 acts as the Nucleophile in catalysis. Asp9 and Ala11 together coordinate Mg(2+). The active-site Schiff-base intermediate with substrate is Lys50. Asp184 provides a ligand contact to Mg(2+).

This sequence belongs to the HAD-like hydrolase superfamily. PhnX family. Homodimer. Mg(2+) is required as a cofactor.

The enzyme catalyses phosphonoacetaldehyde + H2O = acetaldehyde + phosphate + H(+). Involved in phosphonate degradation. The sequence is that of Phosphonoacetaldehyde hydrolase from Lysinibacillus sphaericus (strain C3-41).